A 1274-amino-acid chain; its full sequence is DENN domain-containing protein 5B (1274 aa).

An N-acetylserine modification is found at S2. The uDENN domain occupies 39–244 (DELAGENFDQ…EVPLPPPGRS (206 aa)). 2 positions are modified to phosphoserine: S49 and S178. Residues 263-399 (ELPLSDYPLR…VDFIQELSEV (137 aa)) form the cDENN domain. The 181-residue stretch at 401–581 (VQFGIPPEGS…DNKIMSQWEE (181 aa)) folds into the dDENN domain. The RUN 1 domain occupies 772-932 (LEENTLIASL…DYFCFTSVFT (161 aa)). S822 is subject to Phosphoserine. The helical transmembrane segment at 916 to 936 (LLSLNAVDYFCFTSVFTTIMI) threads the bilayer. The PLAT domain maps to 936–1044 (IPYRSVIIPI…DDGSLERILI (109 aa)). Phosphothreonine is present on T1062. S1068, S1076, and S1079 each carry phosphoserine. The RUN 2 domain occupies 1118–1267 (TVLLCGENGL…QDFTIVLEGS (150 aa)).

Belongs to the RAB6IP1 family.

The protein localises to the membrane. In terms of biological role, guanine nucleotide exchange factor (GEF) which may activate RAB39A and/or RAB39B. Promotes the exchange of GDP to GTP, converting inactive GDP-bound Rab proteins into their active GTP-bound form. In Homo sapiens (Human), this protein is DENN domain-containing protein 5B (DENND5B).